A 132-amino-acid chain; its full sequence is U10-hexatoxin-Hi1a (132 aa).

A signal peptide spans 1-20 (MKGFIVFSLSLCLVFTVCLA). The propeptide occupies 21-30 (EDELMKEAVR).

In terms of processing, contains 5 disulfide bonds. In terms of tissue distribution, expressed by the venom gland.

Its subcellular location is the secreted. In terms of biological role, probable ion channel inhibitor. This Hadronyche infensa (Fraser island funnel-web spider) protein is U10-hexatoxin-Hi1a.